An 84-amino-acid chain; its full sequence is Large ribosomal subunit protein bL27 (84 aa).

The disordered stretch occupies residues 1 to 22 (MAHKKAGGSTRNGRDSESKRLG).

It belongs to the bacterial ribosomal protein bL27 family.

The sequence is that of Large ribosomal subunit protein bL27 from Shewanella amazonensis (strain ATCC BAA-1098 / SB2B).